Here is a 199-residue protein sequence, read N- to C-terminus: N-(5'-phosphoribosyl)anthranilate isomerase (199 aa).

This sequence belongs to the TrpF family.

The catalysed reaction is N-(5-phospho-beta-D-ribosyl)anthranilate = 1-(2-carboxyphenylamino)-1-deoxy-D-ribulose 5-phosphate. It participates in amino-acid biosynthesis; L-tryptophan biosynthesis; L-tryptophan from chorismate: step 3/5. This Streptococcus pneumoniae (strain ATCC BAA-255 / R6) protein is N-(5'-phosphoribosyl)anthranilate isomerase.